A 339-amino-acid chain; its full sequence is Lipoate-protein ligase A (339 aa).

Positions 29–216 (DPSQQVLFLW…SFENFYAGKA (188 aa)) constitute a BPL/LPL catalytic domain. ATP is bound by residues arginine 71, 76-79 (GAVF), and lysine 134. Lysine 134 is a binding site for (R)-lipoate.

This sequence belongs to the LplA family. Monomer.

The protein resides in the cytoplasm. The enzyme catalyses L-lysyl-[lipoyl-carrier protein] + (R)-lipoate + ATP = N(6)-[(R)-lipoyl]-L-lysyl-[lipoyl-carrier protein] + AMP + diphosphate + H(+). It functions in the pathway protein modification; protein lipoylation via exogenous pathway; protein N(6)-(lipoyl)lysine from lipoate: step 1/2. It participates in protein modification; protein lipoylation via exogenous pathway; protein N(6)-(lipoyl)lysine from lipoate: step 2/2. Its function is as follows. Catalyzes both the ATP-dependent activation of exogenously supplied lipoate to lipoyl-AMP and the transfer of the activated lipoyl onto the lipoyl domains of lipoate-dependent enzymes. The polypeptide is Lipoate-protein ligase A (Bdellovibrio bacteriovorus (strain ATCC 15356 / DSM 50701 / NCIMB 9529 / HD100)).